Consider the following 400-residue polypeptide: Involucrin (400 aa).

Disordered regions lie at residues 1–196 (MSQQ…HLKQ), 273–312 (KEEVHLEQQQQETQELQQHQGAGILEQKLHQEKAQSEQQL), and 333–381 (KRDE…KGEV). Composition is skewed to low complexity over residues 78–159 (QQQQ…QQHQ), 169–186 (EQQQQEPQKQELHLGQQE), and 279–292 (EQQQQETQELQQHQ). Basic and acidic residues predominate over residues 333–344 (KRDEQLGKKEEQ). The segment covering 346–358 (LEPSEQQEGLLEQ) has biased composition (low complexity).

The protein belongs to the involucrin family. In terms of assembly, directly or indirectly cross-linked to cornifelin (CNFN). Substrate of transglutaminase. Specific glutamines or lysines are cross-linked to keratins, desmoplakin and to inter involucrin molecules. As to expression, keratinocytes of epidermis and other stratified squamous epithelia.

The protein localises to the cytoplasm. Functionally, part of the insoluble cornified cell envelope (CE) of stratified squamous epithelia. The sequence is that of Involucrin (IVL) from Tupaia glis (Common tree shrew).